The following is a 172-amino-acid chain: Bone marrow stromal antigen 2 (172 aa).

The Cytoplasmic segment spans residues 1–26; that stretch reads MAPSFYHYLPVAMDERWEPKGWSIRR. Lys-20 participates in a covalent cross-link: Glycyl lysine isopeptide (Lys-Gly) (interchain with G-Cter in ubiquitin). The chain crosses the membrane as a helical; Signal-anchor for type II membrane protein span at residues 27-47; the sequence is WWLVAAILVVLIGVVLVCLIV. At 48–152 the chain is on the extracellular side; the sequence is YFANAAHSEA…EISTTVQVNS (105 aa). N-linked (GlcNAc...) asparagine glycans are attached at residues Asn-70 and Asn-97. Residues 103–149 adopt a coiled-coil conformation; it reads LRDSLKKKVSQTQEQQARIKELENKIERLNQELENLRTQKEISTTVQ. A lipid anchor (GPI-anchor amidated serine) is attached at Ser-152. A propeptide spans 153 to 172 (removed in mature form); the sequence is GGSVVVSSLLVLVAVLFLHF.

In terms of assembly, parallel homodimer; disulfide-linked. May form homotetramers under reducing conditions. Isoform 1 and isoform 2 form homodimers and also heterodimers with each other. Dimerization is essential for its antiviral activity. Interacts (via cytoplasmic domain) with ARHGAP44. Interacts with MMP14 (via C-terminal cytoplasmic tail). Interacts with LILRA4/ILT7. Interacts with RNF115. Post-translationally, N-glycosylated. In terms of processing, the GPI anchor is essential for its antiviral activity. As to expression, ubiquitously expressed, with highest levels in brain and liver. Present in liver (at protein level).

It localises to the golgi apparatus. Its subcellular location is the trans-Golgi network. The protein localises to the cell membrane. The protein resides in the late endosome. It is found in the membrane raft. It localises to the cytoplasm. Its subcellular location is the apical cell membrane. In terms of biological role, IFN-induced antiviral host restriction factor which efficiently blocks the release of diverse mammalian enveloped viruses by directly tethering nascent virions to the membranes of infected cells. Acts as a direct physical tether, holding virions to the cell membrane and linking virions to each other. The tethered virions can be internalized by endocytosis and subsequently degraded or they can remain on the cell surface. In either case, their spread as cell-free virions is restricted. Its target viruses belong to diverse families, including retroviridae: human immunodeficiency virus type 1 (HIV-1), mouse mammary tumor virus (MMTV) and murine leukemia virus (MLV), filoviridae: ebola virus (EBOV), arenaviridae: lassa virus (LASV), and rhabdoviridae: vesicular stomatitis virus (VSV). Can inhibit cell surface proteolytic activity of MMP14 causing decreased activation of MMP15 which results in inhibition of cell growth and migration. Can stimulate signaling by LILRA4/ILT7 and consequently provide negative feedback to the production of IFN by plasmacytoid dendritic cells in response to viral infection. Plays a role in the organization of the subapical actin cytoskeleton in polarized epithelial cells. In Rattus norvegicus (Rat), this protein is Bone marrow stromal antigen 2 (Bst2).